A 150-amino-acid chain; its full sequence is 3-dehydroquinate dehydratase (150 aa).

Catalysis depends on Tyr-26, which acts as the Proton acceptor. Substrate is bound by residues Asn-77, His-83, and Asp-90. The active-site Proton donor is the His-103. Residues 104-105 (LS) and Arg-114 each bind substrate.

The protein belongs to the type-II 3-dehydroquinase family. As to quaternary structure, homododecamer.

It catalyses the reaction 3-dehydroquinate = 3-dehydroshikimate + H2O. The protein operates within metabolic intermediate biosynthesis; chorismate biosynthesis; chorismate from D-erythrose 4-phosphate and phosphoenolpyruvate: step 3/7. Catalyzes a trans-dehydration via an enolate intermediate. The sequence is that of 3-dehydroquinate dehydratase from Erwinia tasmaniensis (strain DSM 17950 / CFBP 7177 / CIP 109463 / NCPPB 4357 / Et1/99).